Reading from the N-terminus, the 168-residue chain is Scytalone dehydratase arp1 (168 aa).

Substrate-binding residues include Tyr29 and Tyr49. Residues His84 and His109 contribute to the active site. Residue Asn130 participates in substrate binding.

The protein belongs to the scytalone dehydratase family. Homotrimer. Each subunit contains an active site, located in the central part of the hydrophobic core of the monomer, which functions independently.

The protein localises to the endosome. The catalysed reaction is scytalone = 1,3,8-trihydroxynaphthalene + H2O. Its pathway is pigment biosynthesis; melanin biosynthesis. Fenoxanil inhibits arp1 scytalone dehydratase activity. In terms of biological role, scytalone dehydratase; part of the gene cluster that mediates the biosynthesis of dihydroxynaphthalene (DHN)-melanin, a bluish-green pigment and a structural component of the conidial wall. The first step of the pathway is the production of the heptaketide naphtopyrone YWA1 by the polyketide synthase alb1 though condensation of acetyl-CoA with malonyl-CoA. The naphtopyrone YWA1 is then converted to the pentaketide 1,3,6,8-tetrahydroxynaphthalene (1,3,6,8-THN) by the heptaketide hydrolyase ayg1 though chain-length shortening. 1,3,6,8-THN is substrate of the hydroxynaphthalene reductase arp2 to yield scytalone. The scytalone dehydratase arp1 then reduces scytalone to 1,3,8-THN. 1,3,8-THN is also substrate of the hydroxynaphthalene reductase arp2 to yield vermelone. Vermelone is further converted by the multicopper oxidase abr1 to 1,8-DHN. Finally the laccase abr2 transforms 1,8-DHN to DHN-melanin. DHN-melanin biosynthesis appears to be initiated in endosomes where early enzymes (abl1, ayg1, arp1 and arp2) localize, with exocytosis leading to melanin deposition on the cell surface where late enzymes (abr1 and abr2) localize. DHN-melanin is an important structural component of the outer cell wall and is required for the presence of conidial surface hydrophobins. DHN-melanin also plays a crucial role in fungal virulence, including a protective role against the host's immune defenses. DHN-melanin also protects conidia against amoeba predation. This is Scytalone dehydratase arp1 from Aspergillus fumigatus (strain ATCC MYA-4609 / CBS 101355 / FGSC A1100 / Af293) (Neosartorya fumigata).